Reading from the N-terminus, the 375-residue chain is FAD-dependent catabolic D-arginine dehydrogenase DauA (375 aa).

FAD is bound by residues Ala14, 32 to 33, 41 to 48, Ala171, and 331 to 336; these read ER, STGRSAAH, and GGYGIQ.

Belongs to the FAD-dependent glycerol-3-phosphate dehydrogenase family. In terms of assembly, monomer. The cofactor is FAD.

It catalyses the reaction D-arginine + A + H2O = 5-guanidino-2-oxopentanoate + AH2 + NH4(+). The enzyme catalyses a D-alpha-amino acid + A + H2O = a 2-oxocarboxylate + AH2 + NH4(+). Inhibited by D-arginine and D-lysine at high concentration. Functionally, dauA is highly expressed within the cystic fibrosis (CF) lung, and it is required for virulence via the optimal production of hydrogen cyanide, pyocyanine, pyoverdine, rhamnolipid and alginate during biofilm formation. Involved in the catabolism of D-lysine and D-arginine. Under aerobic conditions, the arginine succinyltransferase (AST) and arginine transaminase (ATA) pathways are 2 major routes for L-arginine utilization as the sole source of carbon and nitrogen. The D-to-L racemization of arginine by DauA and DauB is necessary, before to be channeled into the AST and/or ATA pathways. DauA catalyzes the flavin-dependent oxidative deamination of D-arginine into 2-ketoarginine (2-KA) and ammonia. It also has dehydrogenase activity towards D-lysine, D-tyrosine, D-methionine, D-phenylalanine, D-ornithine, D-histidine and D-leucine as substrates. In Pseudomonas aeruginosa (strain ATCC 15692 / DSM 22644 / CIP 104116 / JCM 14847 / LMG 12228 / 1C / PRS 101 / PAO1), this protein is FAD-dependent catabolic D-arginine dehydrogenase DauA.